The sequence spans 740 residues: F-BAR and double SH3 domains protein 2 (740 aa).

One can recognise an F-BAR domain in the interval 8–282 (VKVTQELKNI…NSSKVVRDYN (275 aa)). Positions 303-323 (PCDSDTSRQLESETGTTEEHS) are disordered. The segment covering 307 to 323 (DTSRQLESETGTTEEHS) has biased composition (basic and acidic residues). The stretch at 356-397 (GAAVSEQSRAELEQKIDEARENIRKAEIIKLKAEARLDLLKQ) forms a coiled coil. 2 consecutive SH3 domains span residues 469-530 (NYPL…FPTS) and 567-629 (ASVC…ELSA). Positions 567–629 (ASVCFVKALY…PSVLVEELSA (63 aa)) are required and sufficient for location at clathrin-coated pits. A disordered region spans residues 633 to 740 (GDTPWMREIQ…KIEDVEITLV (108 aa)). A compositionally biased stretch (pro residues) spans 646–657 (SPKPHASLPPLP). Phosphoserine is present on residues S675 and S681.

As to quaternary structure, homodimer. Interacts (via SH3 domain 2) with ITSN1 (via SH3 domain 4). Recruited to clathrin-coated pits during a mid-to-late stage of assembly via interaction with ITSN1. Interacts (via SH3 domain 1) with WASL. Interacts with WAS. Interacts with CASK and MAGI1. CASK inhibits interaction with MAGI1. In terms of processing, phosphorylated. Phosphorylation on a Ser residue is important for recruitment to the cell membrane and for its role in promoting endocytosis. Liver, brain, heart, placenta, skeletal muscle, pancreas, lung and kidney.

The protein localises to the cytoplasm. The protein resides in the cell junction. It localises to the membrane. Its subcellular location is the clathrin-coated pit. It is found in the cell membrane. The protein localises to the cell projection. The protein resides in the stereocilium. Adapter protein that plays a role in endocytosis via clathrin-coated pits. Contributes to the internalization of cell surface receptors, such as integrin ITGB1 and transferrin receptor. Promotes endocytosis of EGFR in cancer cells, and thereby contributes to the down-regulation of EGFR signaling. Recruited to clathrin-coated pits during a mid-to-late stage of assembly, where it is required for normal progress from U-shaped intermediate stage pits to terminal, omega-shaped pits. Binds to membranes enriched in phosphatidylinositol 3,4-bisphosphate or phosphatidylinositol 3,4,5-trisphosphate. When bound to membranes, promotes actin polymerization via its interaction with WAS and/or WASL which leads to the activation of the Arp2/3 complex. Does not promote actin polymerisation in the absence of membranes. The protein is F-BAR and double SH3 domains protein 2 (FCHSD2) of Homo sapiens (Human).